A 129-amino-acid polypeptide reads, in one-letter code: Probable cytochrome b5 2 (129 aa).

Positions 3-79 (EKTITVEEVL…LEKFYIGNLL (77 aa)) constitute a Cytochrome b5 heme-binding domain. 2 residues coordinate heme: histidine 38 and histidine 62. The chain crosses the membrane as a helical span at residues 105-125 (VKPAMWLFVLVMVVAYFAFRK).

Belongs to the cytochrome b5 family.

The protein localises to the endoplasmic reticulum membrane. Its subcellular location is the microsome membrane. The protein resides in the mitochondrion. In terms of biological role, membrane bound hemoprotein which function as an electron carrier for several membrane bound oxygenases. This Schizosaccharomyces pombe (strain 972 / ATCC 24843) (Fission yeast) protein is Probable cytochrome b5 2 (oca8).